Consider the following 905-residue polypeptide: MVGLGVFARKFFGSAHERRLKVLRKKAEQINVLEEQFQKLSDTQLCKKTDEFRKRLVEGETVDLLLPEAFATVREAAKRVYDMRPFDVQLIGGMVLHDCGIAEMRTGEGKTLMATLPIYLNALEGKGVHVVTVNDYLANRDAETMGKIFGFLGLTTGVILHDLDSDARRAAYACDITYATNNELGFDYLRDNMAFDRSQMVQRGHHYAIVDEVDSILIDEARTPLIISGPLEDRTDFYNLIDTFIPALTPEDYEIDEKQKTTTFTEVGTEKIEKMLEQAGHLKGESLYDIENVAIVHHINNALKAHKLFVRDKDYIVRNGEIVIIDEFTGRMMPGRRYSEGLHQALEAKEHVAIQPENQTLASITFQNYFRMYRKLSGMTGTAITEAEEFSNIYGLDVIEVPTNLPIQRRDEDDEIYRTAEEKYRAIVRDIRQAHEKRQPILVGTTSIEKSEQLAERLRKEGITNFRVLNARYHEQEAYIIAQAGVPGAVTIATNMAGRGTDIQLGGNIEMRIRQELQDMPEGLERTAKIEEIKKDVKQLKEKALAAGGLYVIATERHESRRIDNQLRGRSGRQGDPGRSKFFLSLQDDLMRIFGSNRMDGMLQKLGLKENEAIIHPWINKAIEKAQKKVEARNFEIRKNLLKYDDVMNDQRKVIFEQRMEIMNAEDLTEMILEMRNEVVEDLVETYIPSGTYCEKWDITALQEELHQLFNLELPIETWAKEDGIAEEQILERISNAVTKLENERIERFSPEVMAYFHKAVLLETIDTLWREHLVHLDHLRSVVGFRGYAQRDPLNEYKTESFELFQAMLRNLRRIVTSKLMRFEIIQQPIEPRIPEQTDVGDPILNDQNKKNSSTLWTPSQENKFVNPKDRNPSDSTTWGKVGRNERCPCGSEKKYKHCHGAFV.

ATP is bound by residues glutamine 89, 107-111, and aspartate 502; that span reads GEGKT. Residues 837–885 are disordered; that stretch reads EQTDVGDPILNDQNKKNSSTLWTPSQENKFVNPKDRNPSDSTTWGKVGR. Over residues 852–865 the composition is skewed to polar residues; that stretch reads KNSSTLWTPSQENK. Zn(2+)-binding residues include cysteine 889, cysteine 891, cysteine 900, and histidine 901.

The protein belongs to the SecA family. As to quaternary structure, monomer and homodimer. Part of the essential Sec protein translocation apparatus which comprises SecA, SecYEG and auxiliary proteins SecDF-YajC and YidC. Requires Zn(2+) as cofactor.

The protein resides in the cell inner membrane. It is found in the cytoplasm. The enzyme catalyses ATP + H2O + cellular proteinSide 1 = ADP + phosphate + cellular proteinSide 2.. Part of the Sec protein translocase complex. Interacts with the SecYEG preprotein conducting channel. Has a central role in coupling the hydrolysis of ATP to the transfer of proteins into and across the cell membrane, serving both as a receptor for the preprotein-SecB complex and as an ATP-driven molecular motor driving the stepwise translocation of polypeptide chains across the membrane. This is Protein translocase subunit SecA from Bartonella henselae (strain ATCC 49882 / DSM 28221 / CCUG 30454 / Houston 1) (Rochalimaea henselae).